Here is a 115-residue protein sequence, read N- to C-terminus: U3-lycotoxin-Ls1s (115 aa).

The N-terminal stretch at 1-20 (MKFVLLFGVFLLTLFSYSSS) is a signal peptide. A propeptide spanning residues 21–44 (EMLDDFDQADEDELLSLIEKEEAR) is cleaved from the precursor. Cystine bridges form between C48–C63, C55–C72, C62–C87, and C74–C85.

This sequence belongs to the neurotoxin 19 (CSTX) family. 01 subfamily. Expressed by the venom gland.

The protein localises to the secreted. This chain is U3-lycotoxin-Ls1s, found in Lycosa singoriensis (Wolf spider).